Here is a 434-residue protein sequence, read N- to C-terminus: APETALA2-like protein 2 (434 aa).

The segment at 1-116 (MLLDLNVESP…KTRRGPRSRS (116 aa)) is disordered. The span at 12-23 (RSGTSSSSVLNS) shows a compositional bias: low complexity. The segment covering 25–38 (DAGGGGGGGGGGGL) has biased composition (gly residues). The span at 72 to 87 (LPPPPPAAPSPAPAWQ) shows a compositional bias: pro residues. Over residues 104–113 (VAKKTRRGPR) the composition is skewed to basic residues. A Nuclear localization signal motif is present at residues 106–115 (KKTRRGPRSR). 2 DNA-binding regions (AP2/ERF) span residues 118 to 174 (QYRG…INFN) and 210 to 267 (KFRG…TNFE). An EAR motif is present at residues 291-295 (LDLRI).

This sequence belongs to the AP2/ERF transcription factor family. AP2 subfamily. In terms of assembly, may form homodimer. Interacts with TPR2/ASP1. Highly expressed in developing panicles and in young seedlings. Present at low levels at all developmental stages.

The protein localises to the nucleus. Probable transcription factor. Involved in spikelet transition. Together with SNB, controls synergistically inflorescence architecture and floral meristem establishment via the regulation of spatio-temporal expression of B- and E-function floral organ identity genes in the lodicules and of spikelet meristem genes. Prevents lemma and palea elongation as well as grain growth. The protein is APETALA2-like protein 2 of Oryza sativa subsp. japonica (Rice).